Consider the following 313-residue polypeptide: Porphobilinogen deaminase (313 aa).

Cysteine 242 carries the post-translational modification S-(dipyrrolylmethanemethyl)cysteine.

The protein belongs to the HMBS family. Monomer. Dipyrromethane serves as cofactor.

The enzyme catalyses 4 porphobilinogen + H2O = hydroxymethylbilane + 4 NH4(+). The protein operates within porphyrin-containing compound metabolism; protoporphyrin-IX biosynthesis; coproporphyrinogen-III from 5-aminolevulinate: step 2/4. In terms of biological role, tetrapolymerization of the monopyrrole PBG into the hydroxymethylbilane pre-uroporphyrinogen in several discrete steps. The chain is Porphobilinogen deaminase from Pseudomonas syringae pv. syringae (strain B728a).